The chain runs to 417 residues: MEVIVIGSGVIGLTSAWYLAKEGHTVTVIDRQDSSGKETSFANAGQISYGYSSPWAAPGIPLKAMKWLTQEHAPLKVKPSLSPELVAWATKMLANCNEAKYAMNKSRMLRVANFSRECLTHLRTSEDLAYEGRQKGTLQVFRSEKQLDAIQQDMKLLTESGIEHSLFDVDQCLSVESGLADVKDKLVGGLYLPHDETGDCHQFCLTLTEKAKQLGVRFVFDTEVVSLNHQNRAIETITTTQGEFKADAYVVASGSYSRELLKQVDLSIPVYPVKGYSLTLPIVNVDKSPTSTVMDETYKVAMTRFDDRIRIAGTAELAGFDYLIPEKRKATIDMVIKDLFPQAGDFSKAEYWTGLRPMTPDGTPIIGKTPIKNLFTNTGHGTLGWTMACGSGKILASVVSGSASDIKSDDLSIHRYL.

3–17 (VIVIGSGVIGLTSAW) provides a ligand contact to FAD.

This sequence belongs to the DadA oxidoreductase family. It depends on FAD as a cofactor.

It carries out the reaction a D-alpha-amino acid + A + H2O = a 2-oxocarboxylate + AH2 + NH4(+). It participates in amino-acid degradation; D-alanine degradation; NH(3) and pyruvate from D-alanine: step 1/1. Oxidative deamination of D-amino acids. This is D-amino acid dehydrogenase from Vibrio atlanticus (strain LGP32) (Vibrio splendidus (strain Mel32)).